A 171-amino-acid polypeptide reads, in one-letter code: UPF0398 protein STER_0279 (171 aa).

It belongs to the UPF0398 family.

This Streptococcus thermophilus (strain ATCC BAA-491 / LMD-9) protein is UPF0398 protein STER_0279.